Reading from the N-terminus, the 529-residue chain is Aldehyde dehydrogenase 1 (529 aa).

251–256 provides a ligand contact to NAD(+); the sequence is GSTYVG. Residues Glu-273 and Cys-307 contribute to the active site.

Belongs to the aldehyde dehydrogenase family.

The catalysed reaction is an aldehyde + NAD(+) + H2O = a carboxylate + NADH + 2 H(+). The polypeptide is Aldehyde dehydrogenase 1 (Entamoeba histolytica (strain ATCC 30459 / HM-1:IMSS / ABRM)).